Reading from the N-terminus, the 155-residue chain is Ribosome maturation factor RimP (155 aa).

Belongs to the RimP family.

It is found in the cytoplasm. In terms of biological role, required for maturation of 30S ribosomal subunits. The protein is Ribosome maturation factor RimP of Staphylococcus carnosus (strain TM300).